We begin with the raw amino-acid sequence, 589 residues long: Protein kinase G11A (589 aa).

A disordered region spans residues 1–167; the sequence is MASKAMPRAP…SACSSISSVT (167 aa). Polar residues-rich tracts occupy residues 15-36 and 63-76; these read NLQSLKLCSQNDSSLETTSPSK and TQHQNESIDLTGSN. Basic and acidic residues predominate over residues 91–100; that stretch reads RLADEEKGVV. The segment covering 142–165 has biased composition (low complexity); that stretch reads SSSRCRPSTSSDVSDESACSSISS. In terms of domain architecture, Protein kinase spans 195–533; that stretch reads FKLLKKLGCG…ATEIKQHPFF (339 aa). Residues 201–209 and K224 each bind ATP; that span reads LGCGDIGSV. Residue D320 is the Proton acceptor of the active site. The tract at residues 551-589 is disordered; that stretch reads RPVEIERPPKQPVSTSEPAAAPSDAAQKSSDSYLEFDFF.

Belongs to the protein kinase superfamily. Ser/Thr protein kinase family.

It catalyses the reaction L-seryl-[protein] + ATP = O-phospho-L-seryl-[protein] + ADP + H(+). The enzyme catalyses L-threonyl-[protein] + ATP = O-phospho-L-threonyl-[protein] + ADP + H(+). Its function is as follows. May play a role in the regulation of metabolism and signal transduction processes. This Oryza sativa subsp. japonica (Rice) protein is Protein kinase G11A.